A 21-amino-acid polypeptide reads, in one-letter code: Ferredoxin (21 aa).

The 4Fe-4S ferredoxin-type domain occupies 2–21 (KVKVDADACIGCGVCVELCP). Positions 10, 13, and 16 each coordinate [4Fe-4S] cluster.

In terms of assembly, monomer. [4Fe-4S] cluster serves as cofactor.

Ferredoxins are iron-sulfur proteins that transfer electrons in a wide variety of metabolic reactions. This chain is Ferredoxin (fdxA), found in Pyrococcus woesei.